Reading from the N-terminus, the 190-residue chain is Peptidyl-prolyl cis-trans isomerase FKBP20-1 (190 aa).

N-acetylglycine is present on Gly2. Positions 32 to 121 constitute a PPIase FKBP-type domain; sequence LPVVDVHYEG…IFEVELVACR (90 aa). Basic and acidic residues predominate over residues 149-163; the sequence is AAAKEDDKKKREEAK. The disordered stretch occupies residues 149–190; that stretch reads AAAKEDDKKKREEAKAAAAARIQAKLDAKKGPGKGKGKGKAK. The segment covering 179–190 has biased composition (basic residues); it reads GPGKGKGKGKAK.

It belongs to the FKBP-type PPIase family.

The catalysed reaction is [protein]-peptidylproline (omega=180) = [protein]-peptidylproline (omega=0). PPIases accelerate the folding of proteins. It catalyzes the cis-trans isomerization of proline imidic peptide bonds in oligopeptides. In Arabidopsis thaliana (Mouse-ear cress), this protein is Peptidyl-prolyl cis-trans isomerase FKBP20-1 (FKBP20-1).